Here is a 737-residue protein sequence, read N- to C-terminus: Palmitoyltransferase AKR1 (737 aa).

The tract at residues Met-1 to Glu-47 is disordered. The Cytoplasmic portion of the chain corresponds to Met-1 to Lys-304. Over residues Ser-9 to Ser-33 the composition is skewed to polar residues. 6 ANK repeats span residues Pro-54–His-84, Glu-90–Phe-119, Leu-124–Val-153, Gln-157–Cys-190, Asn-194–Ala-223, and Gly-227–Gln-256. A run of 2 helical transmembrane segments spans residues Leu-305–Ile-325 and His-326–Lys-346. At Lys-347–Lys-364 the chain is on the cytoplasmic side. A helical membrane pass occupies residues Thr-365–Thr-385. Residues Arg-386 to Pro-396 lie on the Lumenal side of the membrane. The chain crosses the membrane as a helical span at residues Ile-397–Val-417. The Cytoplasmic portion of the chain corresponds to Arg-418 to Lys-493. Residues His-450 to Leu-500 enclose the DHHC domain. The active-site S-palmitoyl cysteine intermediate is the Cys-480. The helical transmembrane segment at Thr-494–Met-514 threads the bilayer. Residues Glu-515–Thr-547 lie on the Lumenal side of the membrane. A helical transmembrane segment spans residues Phe-548–Phe-568. At Val-569 to Val-737 the chain is on the cytoplasmic side.

This sequence belongs to the DHHC palmitoyltransferase family. AKR/ZDHHC17 subfamily.

The protein localises to the early endosome membrane. It localises to the golgi apparatus membrane. It carries out the reaction L-cysteinyl-[protein] + hexadecanoyl-CoA = S-hexadecanoyl-L-cysteinyl-[protein] + CoA. In terms of biological role, palmitoyltransferase specific for casein kinase 1. The protein is Palmitoyltransferase AKR1 (AKR1) of Lachancea kluyveri (strain ATCC 58438 / CBS 3082 / BCRC 21498 / NBRC 1685 / JCM 7257 / NCYC 543 / NRRL Y-12651) (Yeast).